The chain runs to 237 residues: NAD(P)H-hydrate epimerase (237 aa).

Residues 11-223 enclose the YjeF N-terminal domain; that stretch reads AASLDRDLMN…GLDIPEYPGV (213 aa). Position 61–65 (61–65) interacts with (6S)-NADPHX; that stretch reads NNGGD. K(+) contacts are provided by Asn62 and Asp123. (6S)-NADPHX contacts are provided by residues 127 to 133 and Asp156; that span reads GFSFSGP. Ser159 serves as a coordination point for K(+).

This sequence belongs to the NnrE/AIBP family. K(+) is required as a cofactor.

Its subcellular location is the cytoplasm. The protein resides in the mitochondrion. It carries out the reaction (6R)-NADHX = (6S)-NADHX. The catalysed reaction is (6R)-NADPHX = (6S)-NADPHX. In terms of biological role, catalyzes the epimerization of the S- and R-forms of NAD(P)HX, a damaged form of NAD(P)H that is a result of enzymatic or heat-dependent hydration. This is a prerequisite for the S-specific NAD(P)H-hydrate dehydratase to allow the repair of both epimers of NAD(P)HX. In Ajellomyces capsulatus (strain G186AR / H82 / ATCC MYA-2454 / RMSCC 2432) (Darling's disease fungus), this protein is NAD(P)H-hydrate epimerase.